Consider the following 422-residue polypeptide: 4-hydroxy-3-methylbut-2-en-1-yl diphosphate synthase (flavodoxin) (422 aa).

[4Fe-4S] cluster contacts are provided by Cys-316, Cys-319, Cys-362, and Glu-369.

This sequence belongs to the IspG family. The cofactor is [4Fe-4S] cluster.

It carries out the reaction (2E)-4-hydroxy-3-methylbut-2-enyl diphosphate + oxidized [flavodoxin] + H2O + 2 H(+) = 2-C-methyl-D-erythritol 2,4-cyclic diphosphate + reduced [flavodoxin]. The protein operates within isoprenoid biosynthesis; isopentenyl diphosphate biosynthesis via DXP pathway; isopentenyl diphosphate from 1-deoxy-D-xylulose 5-phosphate: step 5/6. Functionally, converts 2C-methyl-D-erythritol 2,4-cyclodiphosphate (ME-2,4cPP) into 1-hydroxy-2-methyl-2-(E)-butenyl 4-diphosphate. The polypeptide is 4-hydroxy-3-methylbut-2-en-1-yl diphosphate synthase (flavodoxin) (Anaplasma marginale (strain St. Maries)).